Here is a 336-residue protein sequence, read N- to C-terminus: Phospho-N-acetylmuramoyl-pentapeptide-transferase (336 aa).

The next 10 membrane-spanning stretches (helical) occupy residues 3 to 23, 53 to 73, 78 to 98, 118 to 138, 143 to 163, 174 to 194, 200 to 220, 226 to 246, 251 to 271, and 316 to 336; these read LTLI…PYFI, GGTV…LFSI, SLAL…IGFL, LALQ…PSGI, VFGY…FWVV, GIDG…GVIA, FDVL…FCFN, VFMG…ISIA, WTLL…MLQV, and AFLW…LYVF.

It belongs to the glycosyltransferase 4 family. MraY subfamily. The cofactor is Mg(2+).

The protein resides in the cell membrane. The enzyme catalyses UDP-N-acetyl-alpha-D-muramoyl-L-alanyl-gamma-D-glutamyl-L-lysyl-D-alanyl-D-alanine + di-trans,octa-cis-undecaprenyl phosphate = Mur2Ac(oyl-L-Ala-gamma-D-Glu-L-Lys-D-Ala-D-Ala)-di-trans,octa-cis-undecaprenyl diphosphate + UMP. The protein operates within cell wall biogenesis; peptidoglycan biosynthesis. Its function is as follows. Catalyzes the initial step of the lipid cycle reactions in the biosynthesis of the cell wall peptidoglycan: transfers peptidoglycan precursor phospho-MurNAc-pentapeptide from UDP-MurNAc-pentapeptide onto the lipid carrier undecaprenyl phosphate, yielding undecaprenyl-pyrophosphoryl-MurNAc-pentapeptide, known as lipid I. This is Phospho-N-acetylmuramoyl-pentapeptide-transferase from Streptococcus pyogenes serotype M3 (strain ATCC BAA-595 / MGAS315).